The sequence spans 587 residues: Calcium/calmodulin-dependent protein kinase kinase 2 (587 aa).

The segment covering 1–11 (MSSCVSSQPTS) has biased composition (polar residues). Disordered stretches follow at residues 1–32 (MSSC…SQKP) and 74–115 (EADG…SSLD). Ser-2 carries the post-translational modification N-acetylserine. Ser-99, Ser-113, Ser-128, Ser-132, and Ser-136 each carry phosphoserine. Over residues 101-115 (QERSQGGPASSSSLD) the composition is skewed to polar residues. The region spanning 164-445 (YTLKDEIGKG…VPEIKLHPWV (282 aa)) is the Protein kinase domain. ATP-binding positions include 170–178 (IGKGSYGVV) and Lys-193. The interval 203–225 (QAGFPRRPPPRGTRPAPGGCIQP) is RP domain. The tract at residues 204–224 (AGFPRRPPPRGTRPAPGGCIQ) is disordered. Residue Asp-311 is the Proton acceptor of the active site. The interval 471-476 (ENSVKH) is autoinhibitory domain. Residues 474-499 (VKHIPSLATVILVKTMIRKRSFGNPF) are calmodulin-binding. Phosphoserine occurs at positions 494 and 510. The disordered stretch occupies residues 496-587 (GNPFEGSRRE…QQPEEAMEPE (92 aa)). The span at 520 to 535 (PTREWEPLSEPKEARQ) shows a compositional bias: basic and acidic residues. The span at 569–579 (PGSPPRTPPQQ) shows a compositional bias: pro residues. Ser-571 carries the post-translational modification Phosphoserine.

It belongs to the protein kinase superfamily. Ser/Thr protein kinase family. Interacts with calmodulin. Phosphorylated by PKA. Each isoform may show a different pattern of phosphorylation. Autophosphorylated. As to expression, mainly expressed in brain, but detected in all tissues tested (at protein level). In the brain, isoform 1 may be predominant. with high levels in the cerebellum and hippocampus, although isoform 3 is detectable. Isoform 3 is also expressed in lung.

It localises to the nucleus. It is found in the cytoplasm. The protein localises to the cell projection. Its subcellular location is the neuron projection. The catalysed reaction is L-seryl-[protein] + ATP = O-phospho-L-seryl-[protein] + ADP + H(+). The enzyme catalyses L-threonyl-[protein] + ATP = O-phospho-L-threonyl-[protein] + ADP + H(+). With respect to regulation, activated by Ca(2+)/calmodulin. Binding of calmodulin may relieve intrasteric autoinhibition. Autophosphorylation does not alter activity or regulation by Ca(2+)/calmodulin. In part, activity is independent on Ca(2+)/calmodulin. Calcium/calmodulin-dependent protein kinase belonging to a proposed calcium-triggered signaling cascade involved in a number of cellular processes. Phosphorylates CAMK1 and CAMK4. Phosphorylates CAMK1D. Seems to be involved in hippocampal activation of CREB1. Efficiently phosphorylates 5'-AMP-activated protein kinase (AMPK) trimer, including that consisting of PRKAA1, PRKAB1 and PRKAG1. This phosphorylation is stimulated in response to Ca(2+) signals. May play a role in neurite growth. Isoform 2 may promote neurite elongation, while isoform 1 may promoter neurite branching. This chain is Calcium/calmodulin-dependent protein kinase kinase 2 (Camkk2), found in Rattus norvegicus (Rat).